The chain runs to 76 residues: Translation initiation factor IF-1 (76 aa).

An S1-like domain is found at 1-72 (MAKKDVVVMQ…NKGRIVKREK (72 aa)).

It belongs to the IF-1 family. As to quaternary structure, component of the 30S ribosomal translation pre-initiation complex which assembles on the 30S ribosome in the order IF-2 and IF-3, IF-1 and N-formylmethionyl-tRNA(fMet); mRNA recruitment can occur at any time during PIC assembly.

It is found in the cytoplasm. In terms of biological role, one of the essential components for the initiation of protein synthesis. Stabilizes the binding of IF-2 and IF-3 on the 30S subunit to which N-formylmethionyl-tRNA(fMet) subsequently binds. Helps modulate mRNA selection, yielding the 30S pre-initiation complex (PIC). Upon addition of the 50S ribosomal subunit IF-1, IF-2 and IF-3 are released leaving the mature 70S translation initiation complex. The polypeptide is Translation initiation factor IF-1 (Petrotoga mobilis (strain DSM 10674 / SJ95)).